Consider the following 575-residue polypeptide: Cyclic nucleotide-gated channel alpha-4 (575 aa).

The Cytoplasmic portion of the chain corresponds to 1-38; the sequence is MSQDSKVKTTESTPPAPTKARKWLPVLDPSGDYYYWWL. A helical membrane pass occupies residues 39–60; sequence NTMVFPIMYNLIIVVCRACFPD. At 61–70 the chain is on the extracellular side; that stretch reads LQHSYLVAWF. The chain crosses the membrane as a helical span at residues 71-91; sequence VLDYTSDLLYLLDIGVRFHTG. At 92–116 the chain is on the cytoplasmic side; it reads FLEQGILVVDKSMIASRYVRTWSFL. A helical transmembrane segment spans residues 117 to 135; it reads LDLASLVPTDAAYVQLGPH. Topologically, residues 136–140 are extracellular; the sequence is IPTLR. The chain crosses the membrane as a helical span at residues 141–159; sequence LNRFLRVPRLFEAFDRTET. Over 160–166 the chain is Cytoplasmic; sequence RTAYPNA. The tract at residues 164 to 272 is ion conduction pathway; sequence PNAFRIAKLM…GSMSSVIYNM (109 aa). A helical membrane pass occupies residues 167 to 190; it reads FRIAKLMIYIFVVIHWNSCLYFAL. Topologically, residues 191 to 213 are extracellular; it reads SRYLGFGRDAWVYPDPAQPGFER. 2 helical membrane passes run 214–248 and 249–273; these read LRRQ…LFMV and GDFL…YNMN. The segment at 231–234 is selectivity filter; the sequence is TVGD. The C-linker stretch occupies residues 274-350; the sequence is TADAAFYPDH…STLSRVQIFQ (77 aa). Over 274–575 the chain is Cytoplasmic; that stretch reads TADAAFYPDH…AGQEGPSGLE (302 aa). Residues 292 to 302 carry the IQ-type motif; that stretch reads LQHVNRRLERR. 348 to 471 is a binding site for a nucleoside 3',5'-cyclic phosphate; it reads IFQNCEASLL…AVMEEKGREI (124 aa). The tract at residues 354 to 474 is cyclic nucleotide-binding domain; that stretch reads ASLLEELVLK…EEKGREILLK (121 aa). 3',5'-cyclic GMP-binding residues include Gly414, Ser417, Arg430, and Thr431. Residues Arg430 and Thr431 each coordinate 3',5'-cyclic AMP. Residues 493 to 547 adopt a coiled-coil conformation; sequence TESRLKGLDQQLDDLQTKFARLLAELESSALKIAYRIERLEWQTREWPMPDDMGE. A disordered region spans residues 536 to 575; sequence TREWPMPDDMGEADDEAEPGEGTSKDGEEKAGQEGPSGLE. Residues 544 to 554 are compositionally biased toward acidic residues; sequence DMGEADDEAEP. Basic and acidic residues predominate over residues 558–567; that stretch reads TSKDGEEKAG.

Belongs to the cyclic nucleotide-gated cation channel (TC 1.A.1.5) family. CNGA4 subfamily. As to quaternary structure, the olfactory cyclic nucleotide-gated channel is an heterotetramer composed of CNGA2, CNGA4 and CNGB1b subunits with 2:1:1 stoichiometry. In terms of tissue distribution, expressed in the olfactory epithelium.

It is found in the cell projection. It localises to the cilium membrane. The catalysed reaction is Ca(2+)(in) = Ca(2+)(out). It carries out the reaction Na(+)(in) = Na(+)(out). The enzyme catalyses K(+)(in) = K(+)(out). It catalyses the reaction NH4(+)(in) = NH4(+)(out). The catalysed reaction is Rb(+)(in) = Rb(+)(out). It carries out the reaction Li(+)(in) = Li(+)(out). The enzyme catalyses Cs(+)(in) = Cs(+)(out). Ca(2+)-calmodulin exerts its inhibitory effect in cAMP sensitivity by binding to IQ-like motif of CNGA4 and preferably binds to the channel in the closed state. Inhibition by PIP3 of the CNG channel probably occurs via CGNA2 binding. In terms of biological role, pore-forming subunit of the olfactory cyclic nucleotide-gated channel. Operates in the cilia of olfactory sensory neurons where chemical stimulation of the odorant is converted to an electrical signal. Mediates odorant-induced cAMP-dependent Ca(2+) influx triggering neuron depolarization. The rise of intracellular Ca(2+) levels potentiates the olfactory response by activating Ca(2+)-dependent Cl(-) channels, but it also serves as a negative feedback signal to desensitize the channel for rapid adaptation to odorants. Conducts cGMP- and cAMP-gated ion currents, with permeability for monovalent and divalent cations. Conducts cAMP- and cGMP-gated ion currents, with permeability for monovalent and divalent cations. May conduct nitric oxide-gated Ca(2+) currents relevant to neurons of vomeronasal organ, a system involved in the perception of pheromones. The protein is Cyclic nucleotide-gated channel alpha-4 of Mus musculus (Mouse).